The chain runs to 213 residues: Orotate phosphoribosyltransferase (213 aa).

Residue Lys-26 coordinates 5-phospho-alpha-D-ribose 1-diphosphate. 34–35 (FF) contacts orotate. 5-phospho-alpha-D-ribose 1-diphosphate-binding positions include 72–73 (YK), Arg-99, Lys-100, Lys-103, His-105, and 124–132 (DDVITAGTA). Residues Thr-128 and Arg-156 each contribute to the orotate site.

Belongs to the purine/pyrimidine phosphoribosyltransferase family. PyrE subfamily. Homodimer. The cofactor is Mg(2+).

The catalysed reaction is orotidine 5'-phosphate + diphosphate = orotate + 5-phospho-alpha-D-ribose 1-diphosphate. It functions in the pathway pyrimidine metabolism; UMP biosynthesis via de novo pathway; UMP from orotate: step 1/2. Its function is as follows. Catalyzes the transfer of a ribosyl phosphate group from 5-phosphoribose 1-diphosphate to orotate, leading to the formation of orotidine monophosphate (OMP). This Thioalkalivibrio sulfidiphilus (strain HL-EbGR7) protein is Orotate phosphoribosyltransferase.